The sequence spans 407 residues: Serpin-Z2 (407 aa).

Residues 1 to 28 (MDSKRKNQELSTSETADPSLSKTNKKQK) are disordered. The span at 9–22 (ELSTSETADPSLSK) shows a compositional bias: polar residues. The interval 344–368 (GTEAAAATTVVVVTGSCLWEPKKKI) is RCL.

Belongs to the serpin family.

Its function is as follows. Probable serine protease inhibitor. This is Serpin-Z2 from Arabidopsis thaliana (Mouse-ear cress).